The sequence spans 452 residues: Cobyrinate a,c-diamide synthase (452 aa).

Residues 248 to 441 (RVAYALDAAF…LHIHFYQNLL (194 aa)) form the GATase cobBQ-type domain. Catalysis depends on cysteine 330, which acts as the Nucleophile.

The protein belongs to the CobB/CbiA family. Requires Mg(2+) as cofactor.

The enzyme catalyses cob(II)yrinate + 2 L-glutamine + 2 ATP + 2 H2O = cob(II)yrinate a,c diamide + 2 L-glutamate + 2 ADP + 2 phosphate + 2 H(+). Its pathway is cofactor biosynthesis; adenosylcobalamin biosynthesis; cob(II)yrinate a,c-diamide from sirohydrochlorin (anaerobic route): step 10/10. In terms of biological role, catalyzes the ATP-dependent amidation of the two carboxylate groups at positions a and c of cobyrinate, using either L-glutamine or ammonia as the nitrogen source. This chain is Cobyrinate a,c-diamide synthase, found in Listeria monocytogenes serotype 4b (strain F2365).